A 370-amino-acid chain; its full sequence is uncharacterized protein (370 aa).

The next 10 helical transmembrane spans lie at 6 to 26 (AVVFILAAFLLWGAADYCLGN), 49 to 69 (IGIVSLAPVLAAILIPIVAPF), 79 to 99 (SFANTILAIDMGGYALAGEMA), 111 to 131 (FLGTMMGPAIVFTIPVALGII), 143 to 163 (ILIGLCTVPIGCLIGGLCAGF), 167 to 187 (MIGKNLLIPSLLSAVIAFGLW), 206 to 226 (MVAIIGLAAVSVETMTGIVLI), 236 to 256 (IQTTGTIAIALAGAFPMTAFI), 307 to 327 (VAFAVSGAFVLGSHLGFVAGM), and 333 to 353 (AAMIIGKLAGGVTAAAAAAWM).

It belongs to the EutH family.

The protein localises to the cell membrane. This is an uncharacterized protein from Bacillus subtilis (strain 168).